The primary structure comprises 497 residues: Glycerol kinase (497 aa).

Thr-13 serves as a coordination point for ADP. ATP is bound by residues Thr-13, Thr-14, and Ser-15. Thr-13 lines the sn-glycerol 3-phosphate pocket. Residue Arg-17 participates in ADP binding. Residues Arg-83, Glu-84, and Tyr-135 each contribute to the sn-glycerol 3-phosphate site. Residues Arg-83, Glu-84, and Tyr-135 each contribute to the glycerol site. A Phosphohistidine; by HPr modification is found at His-231. Asp-245 contacts sn-glycerol 3-phosphate. Glycerol is bound by residues Asp-245 and Gln-246. The ADP site is built by Thr-267 and Gly-310. Thr-267, Gly-310, Gln-314, and Gly-411 together coordinate ATP. ADP-binding residues include Gly-411 and Asn-415.

It belongs to the FGGY kinase family. Homotetramer and homodimer (in equilibrium). Post-translationally, the phosphoenolpyruvate-dependent sugar phosphotransferase system (PTS), including enzyme I, and histidine-containing protein (HPr) are required for the phosphorylation, which leads to the activation of the enzyme.

The catalysed reaction is glycerol + ATP = sn-glycerol 3-phosphate + ADP + H(+). Its pathway is polyol metabolism; glycerol degradation via glycerol kinase pathway; sn-glycerol 3-phosphate from glycerol: step 1/1. Activated by phosphorylation and inhibited by fructose 1,6-bisphosphate (FBP). Its function is as follows. Key enzyme in the regulation of glycerol uptake and metabolism. Catalyzes the phosphorylation of glycerol to yield sn-glycerol 3-phosphate. This Listeria monocytogenes serovar 1/2a (strain ATCC BAA-679 / EGD-e) protein is Glycerol kinase.